A 344-amino-acid chain; its full sequence is UDP-3-O-acylglucosamine N-acyltransferase (344 aa).

The Proton acceptor role is filled by His244.

Belongs to the transferase hexapeptide repeat family. LpxD subfamily. In terms of assembly, homotrimer.

It catalyses the reaction a UDP-3-O-[(3R)-3-hydroxyacyl]-alpha-D-glucosamine + a (3R)-hydroxyacyl-[ACP] = a UDP-2-N,3-O-bis[(3R)-3-hydroxyacyl]-alpha-D-glucosamine + holo-[ACP] + H(+). It functions in the pathway bacterial outer membrane biogenesis; LPS lipid A biosynthesis. In terms of biological role, catalyzes the N-acylation of UDP-3-O-acylglucosamine using 3-hydroxyacyl-ACP as the acyl donor. Is involved in the biosynthesis of lipid A, a phosphorylated glycolipid that anchors the lipopolysaccharide to the outer membrane of the cell. The sequence is that of UDP-3-O-acylglucosamine N-acyltransferase from Pseudoalteromonas atlantica (strain T6c / ATCC BAA-1087).